A 512-amino-acid chain; its full sequence is Histidine ammonia-lyase (512 aa).

Positions Ala-141–Gly-143 form a cross-link, 5-imidazolinone (Ala-Gly). 2,3-didehydroalanine (Ser) is present on Ser-142.

Belongs to the PAL/histidase family. Post-translationally, contains an active site 4-methylidene-imidazol-5-one (MIO), which is formed autocatalytically by cyclization and dehydration of residues Ala-Ser-Gly.

The protein localises to the cytoplasm. It carries out the reaction L-histidine = trans-urocanate + NH4(+). The protein operates within amino-acid degradation; L-histidine degradation into L-glutamate; N-formimidoyl-L-glutamate from L-histidine: step 1/3. This Bacillus velezensis (strain DSM 23117 / BGSC 10A6 / LMG 26770 / FZB42) (Bacillus amyloliquefaciens subsp. plantarum) protein is Histidine ammonia-lyase.